We begin with the raw amino-acid sequence, 449 residues long: Adenylosuccinate synthetase (449 aa).

GTP contacts are provided by residues 12–18 and 40–42; these read GDEGKGK and GHT. The Proton acceptor role is filled by aspartate 13. Residues aspartate 13 and glycine 40 each coordinate Mg(2+). IMP contacts are provided by residues 13–16, 38–41, threonine 128, arginine 142, glutamine 223, threonine 238, and arginine 302; these read DEGK and NAGH. Catalysis depends on histidine 41, which acts as the Proton donor. 298-304 lines the substrate pocket; it reads TTTGRRR. Residues arginine 304, 330–332, and 412–414 contribute to the GTP site; these read KLD and SLG.

It belongs to the adenylosuccinate synthetase family. In terms of assembly, homodimer. Mg(2+) is required as a cofactor.

The protein resides in the cytoplasm. It catalyses the reaction IMP + L-aspartate + GTP = N(6)-(1,2-dicarboxyethyl)-AMP + GDP + phosphate + 2 H(+). It functions in the pathway purine metabolism; AMP biosynthesis via de novo pathway; AMP from IMP: step 1/2. Functionally, plays an important role in the de novo pathway of purine nucleotide biosynthesis. Catalyzes the first committed step in the biosynthesis of AMP from IMP. This Gloeothece citriformis (strain PCC 7424) (Cyanothece sp. (strain PCC 7424)) protein is Adenylosuccinate synthetase.